Reading from the N-terminus, the 204-residue chain is uncharacterized protein (204 aa).

Residues 118–169 are disordered; the sequence is FPAASERPMPSRRLSKATQNVQTRPSERPAPCHRRPGPRGPGGRDPPEACHP.

This is an uncharacterized protein from Encephalitozoon cuniculi (strain GB-M1) (Microsporidian parasite).